The sequence spans 68 residues: Large ribosomal subunit protein bL32 (68 aa).

It belongs to the bacterial ribosomal protein bL32 family.

The polypeptide is Large ribosomal subunit protein bL32 (Onion yellows phytoplasma (strain OY-M)).